The chain runs to 355 residues: Molybdenum import ATP-binding protein ModC (355 aa).

The 233-residue stretch at 1–233 (MTLIVEAKQR…PSAAADRKEA (233 aa)) folds into the ABC transporter domain. Position 31-38 (31-38 (GRSGSGKT)) interacts with ATP. The region spanning 291–355 (GLSALNILEG…AIIKTVALEG (65 aa)) is the Mop domain.

It belongs to the ABC transporter superfamily. Molybdate importer (TC 3.A.1.8) family. As to quaternary structure, the complex is composed of two ATP-binding proteins (ModC), two transmembrane proteins (ModB) and a solute-binding protein (ModA).

Its subcellular location is the cell inner membrane. It catalyses the reaction molybdate(out) + ATP + H2O = molybdate(in) + ADP + phosphate + H(+). Part of the ABC transporter complex ModABC involved in molybdenum import. Responsible for energy coupling to the transport system. This Rhizobium etli (strain ATCC 51251 / DSM 11541 / JCM 21823 / NBRC 15573 / CFN 42) protein is Molybdenum import ATP-binding protein ModC.